The following is a 186-amino-acid chain: Two-component response regulator ARR6 (186 aa).

In terms of domain architecture, Response regulatory spans 26 to 153 (HVLAVDDSHV…DVKRLRDSLM (128 aa)). Asp86 carries the 4-aspartylphosphate modification.

This sequence belongs to the ARR family. Type-A subfamily. In terms of processing, two-component system major event consists of a His-to-Asp phosphorelay between a sensor histidine kinase (HK) and a response regulator (RR). In plants, the His-to-Asp phosphorelay involves an additional intermediate named Histidine-containing phosphotransfer protein (HPt). This multistep phosphorelay consists of a His-Asp-His-Asp sequential transfer of a phosphate group between first a His and an Asp of the HK protein, followed by the transfer to a conserved His of the HPt protein and finally the transfer to an Asp in the receiver domain of the RR protein. Predominantly expressed in roots.

Its subcellular location is the nucleus. In terms of biological role, functions as a response regulator involved in His-to-Asp phosphorelay signal transduction system. Phosphorylation of the Asp residue in the receiver domain activates the ability of the protein to promote the transcription of target genes. Type-A response regulators seem to act as negative regulators of the cytokinin signaling. The chain is Two-component response regulator ARR6 (ARR6) from Arabidopsis thaliana (Mouse-ear cress).